A 363-amino-acid polypeptide reads, in one-letter code: Aminomethyltransferase (363 aa).

The protein belongs to the GcvT family. In terms of assembly, the glycine cleavage system is composed of four proteins: P, T, L and H.

The enzyme catalyses N(6)-[(R)-S(8)-aminomethyldihydrolipoyl]-L-lysyl-[protein] + (6S)-5,6,7,8-tetrahydrofolate = N(6)-[(R)-dihydrolipoyl]-L-lysyl-[protein] + (6R)-5,10-methylene-5,6,7,8-tetrahydrofolate + NH4(+). Functionally, the glycine cleavage system catalyzes the degradation of glycine. This chain is Aminomethyltransferase, found in Staphylococcus saprophyticus subsp. saprophyticus (strain ATCC 15305 / DSM 20229 / NCIMB 8711 / NCTC 7292 / S-41).